Consider the following 781-residue polypeptide: MHYHNKDDWEEISFIGEGQYGRVIKCRKKNGFILNEQVDYVAIKIISKDKFKRNETDILEKIRLFNIPRYYSHAEDDNFIYIYMEYIEGENLANILKTKKQGRFKESRIISMIADLVETLSFLHKHHVIHRDIKTANLVLDKNKNLKLIDFGASTIQNKKQFEQYLNETTNNNNNPNNNNNNNNNNNNNNNNNNNNNNNNNNINNINNNNDLNGSGSGISTYLNEQYKQSSFAIIGTFNYMAPEVKRNYRATRKSDVWSLGCTIIEMAGGDLSQKLNGIPIIPDHLSDTLKDFLNHCLVIDPKKRSYMEELLSHKLIVHIIGPNKSKNYGVEPKFKDDDDFEEIENEKDNYLSSRFPAKFAPQYEKPKWEIEFEELEFDKDDSEGGAGNFGDVKKGLLNETEVAIKFVKKAHCEAITVCDTFYHEVLILSNLRHPNIVQFMAACIKYGEKETNHCIVSEWMSGGNLTQFLMNNHKVLENNPHLRVKLLTDIAKGILYLHKQHIIHRDLTSNNVLLDFKREILPNQLYGSNEFTAKVCDFGLSSNQSESKKLRGGSIHYMAPENLNGSPINEKSDIYSFGLLVWQMFSYAPPNTIYSPKEMASMVSDPKQNYRPQIPFNVPLKFKELITQCWDRNPLNRPKDFSIIIEKLKEIGLTYNRSSSNVSPINSPLINNNNNNYNNNHLNSLSSSLNSSPTYYAKTFGDSNSNIDVYHSADSITPIVSSPPIIKIDLTQDDWDSKLKQLDLEHENKSLISISINDNNNNNINNNNTNNNNVNDLGYC.

Protein kinase domains follow at residues 9–317 and 379–654; these read WEEI…HKLI and DKDD…EIGL. ATP contacts are provided by residues 15-23 and Lys-44; that span reads IGEGQYGRV. Asp-132 (proton acceptor) is an active-site residue. The disordered stretch occupies residues 168-209; that stretch reads ETTNNNNNPNNNNNNNNNNNNNNNNNNNNNNNNNNINNINNN. Over residues 171 to 209 the composition is skewed to low complexity; it reads NNNNNPNNNNNNNNNNNNNNNNNNNNNNNNNNINNINNN. ATP-binding positions include 385 to 393 and Lys-406; that span reads GGAGNFGDV. Asp-507 serves as the catalytic Proton acceptor.

The protein in the N-terminal section; belongs to the protein kinase superfamily. Ser/Thr protein kinase family. This sequence in the C-terminal section; belongs to the protein kinase superfamily. TKL Tyr protein kinase family. Post-translationally, N-terminal serine/threonine domain is capable of autophosphorylation, in vitro, but to a lower extent than the tyrosine kinase domain. May function as a negative regulator of the tyrosine kinase domain. In terms of processing, C-terminal tyrosine kinase domain is capable of autophosphorylation, in vitro. ZakA and zak2 are coexpressed in prestalk cell population, zakA is enriched in pstB populations and zak1 in pstA populations. ZakA and zak2 are coexpressed in prespore cells, zakA expression levels are 10 fold higher than zak2.

It carries out the reaction L-seryl-[protein] + ATP = O-phospho-L-seryl-[protein] + ADP + H(+). The catalysed reaction is L-threonyl-[protein] + ATP = O-phospho-L-threonyl-[protein] + ADP + H(+). The enzyme catalyses L-tyrosyl-[protein] + ATP = O-phospho-L-tyrosyl-[protein] + ADP + H(+). Positive regulator of gsk3/gskA activity required for cell pattern formation and a downstream effector of carC. The kinases, gsk3/gskA, zakA and zak2, form part of a signaling pathway that responds to extracellular cyclic AMP. The pathway has a role in transcriptional regulation; required to direct prespore/spore fates during development. ZakA negatively regulates prestalk differentiation by regulating expression of ecmB. Phosphorylates Y-214 of gsk3/gskA, in vitro. The sequence is that of Dual specificity protein kinase zakA (zakA) from Dictyostelium discoideum (Social amoeba).